The following is a 270-amino-acid chain: Formamidopyrimidine-DNA glycosylase (270 aa).

Proline 2 (schiff-base intermediate with DNA) is an active-site residue. The active-site Proton donor is the glutamate 3. Lysine 58 functions as the Proton donor; for beta-elimination activity in the catalytic mechanism. The DNA site is built by histidine 91, arginine 110, and arginine 151. Residues 236–270 (FVYGRGGEFCKSCGSTLREIRLGQRASVYCSRCQR) form an FPG-type zinc finger. Arginine 260 acts as the Proton donor; for delta-elimination activity in catalysis.

It belongs to the FPG family. As to quaternary structure, monomer. It depends on Zn(2+) as a cofactor.

The catalysed reaction is Hydrolysis of DNA containing ring-opened 7-methylguanine residues, releasing 2,6-diamino-4-hydroxy-5-(N-methyl)formamidopyrimidine.. The enzyme catalyses 2'-deoxyribonucleotide-(2'-deoxyribose 5'-phosphate)-2'-deoxyribonucleotide-DNA = a 3'-end 2'-deoxyribonucleotide-(2,3-dehydro-2,3-deoxyribose 5'-phosphate)-DNA + a 5'-end 5'-phospho-2'-deoxyribonucleoside-DNA + H(+). Its function is as follows. Involved in base excision repair of DNA damaged by oxidation or by mutagenic agents. Acts as a DNA glycosylase that recognizes and removes damaged bases. Has a preference for oxidized purines, such as 7,8-dihydro-8-oxoguanine (8-oxoG). Has AP (apurinic/apyrimidinic) lyase activity and introduces nicks in the DNA strand. Cleaves the DNA backbone by beta-delta elimination to generate a single-strand break at the site of the removed base with both 3'- and 5'-phosphates. The polypeptide is Formamidopyrimidine-DNA glycosylase (Stutzerimonas stutzeri (strain A1501) (Pseudomonas stutzeri)).